A 131-amino-acid chain; its full sequence is Small ribosomal subunit protein uS11 (131 aa).

Belongs to the universal ribosomal protein uS11 family. In terms of assembly, part of the 30S ribosomal subunit. Interacts with proteins S7 and S18. Binds to IF-3.

Its function is as follows. Located on the platform of the 30S subunit, it bridges several disparate RNA helices of the 16S rRNA. Forms part of the Shine-Dalgarno cleft in the 70S ribosome. In Halorhodospira halophila (strain DSM 244 / SL1) (Ectothiorhodospira halophila (strain DSM 244 / SL1)), this protein is Small ribosomal subunit protein uS11.